Consider the following 115-residue polypeptide: Vitelline membrane protein Vm32E (115 aa).

Residues 1–17 (MKIVAFTLVAFVALAGA) form the signal peptide. One can recognise a VM domain in the interval 35-72 (GYPAPPCPTNYLFSCQPNLAPAPCAQEAPAYGSAGAYT).

The protein belongs to the vitelline membrane family.

Its subcellular location is the secreted. Major early eggshell protein. This Drosophila yakuba (Fruit fly) protein is Vitelline membrane protein Vm32E.